The chain runs to 384 residues: 3,7-dimethylxanthine N-methyltransferase 2 (384 aa).

8 residues coordinate S-adenosyl-L-homocysteine: Tyr18, Cys61, Asn66, Asp100, Leu101, Ser139, Phe140, and Cys156. Tyr157 is a theobromine binding site. Cys158 provides a ligand contact to S-adenosyl-L-homocysteine. Theobromine contacts are provided by His160 and Trp161. Mg(2+) is bound at residue Asn178. Ser237 serves as a coordination point for theobromine. The Mg(2+) site is built by Asp260, Phe262, and Asn263. Tyr368 contacts theobromine.

Belongs to the methyltransferase superfamily. Type-7 methyltransferase family. It depends on Mg(2+) as a cofactor. In terms of tissue distribution, highly expressed in developing endosperm. Detected in young leaves and flower buds. Present in immature fruits (grains), but barely in mature fruits.

The enzyme catalyses 7-methylxanthine + S-adenosyl-L-methionine = theobromine + S-adenosyl-L-homocysteine + H(+). It catalyses the reaction theobromine + S-adenosyl-L-methionine = caffeine + S-adenosyl-L-homocysteine + H(+). It carries out the reaction 1,7-dimethylxanthine + S-adenosyl-L-methionine = caffeine + S-adenosyl-L-homocysteine + H(+). It functions in the pathway alkaloid biosynthesis. Functionally, involved in the biosynthesis of caffeine. Catalyzes the conversion of 7-methylxanthine (7mX) to theobromine and of theobromine to caffeine. Has 1-N-methylation activity. The protein is 3,7-dimethylxanthine N-methyltransferase 2 of Coffea arabica (Arabian coffee).